The chain runs to 81 residues: Mipartoxin-1A (81 aa).

The signal sequence occupies residues 1-21 (MKTLLLTLVVVTIVCLDLGNS). 4 disulfide bridges follow: C24–C42, C35–C61, C65–C73, and C74–C79.

The protein belongs to the three-finger toxin family. Short-chain subfamily. As to expression, expressed by the venom gland.

Its subcellular location is the secreted. Its function is as follows. Snake venom neurotoxin that blocks neuromuscular transmission, presenting a postsynaptic action through the nicotinic acetylcholine receptor (nAChR). Has no cytotoxic activity. The protein is Mipartoxin-1A of Micrurus mipartitus (Red-tailed coral snake).